The sequence spans 681 residues: Calpain-C (681 aa).

Residues 18–331 (LWEDPDFPAV…FSTMEVVYLD (314 aa)) form the Calpain catalytic domain. The domain III stretch occupies residues 332–481 (TETSNDEEML…ILGTGSFRLS (150 aa)). The tract at residues 482 to 514 (CLETQTMILLDPFPALKSTDAERCGGPKVKSVC) is linker. The segment at 515–681 (QYEPVYMQLA…HDWIKSILSC (167 aa)) is domain IV. An EF-hand domain is found at 552–587 (ANIDICRQVIALQDRSGSGRITFQQFKTFMVNLKSW). Ca(2+) is bound by residues D565, S567, S569, and R571.

Belongs to the peptidase C2 family. As to expression, localized to the salivary glands in the larva.

The protein resides in the cytoplasm. Functionally, not known; does not seem to have protease activity. This Drosophila melanogaster (Fruit fly) protein is Calpain-C.